The chain runs to 278 residues: Undecaprenyl-diphosphatase 1 (278 aa).

Transmembrane regions (helical) follow at residues 1-21, 43-63, 83-103, 112-132, 192-212, 224-244, and 257-277; these read MFFG…TEFL, AFTT…VVLL, IWAT…IGFL, LMNW…FIFI, FSFF…IGSY, IVIL…VIKW, and FGWY…IGII.

It belongs to the UppP family.

It localises to the cell membrane. It catalyses the reaction di-trans,octa-cis-undecaprenyl diphosphate + H2O = di-trans,octa-cis-undecaprenyl phosphate + phosphate + H(+). Catalyzes the dephosphorylation of undecaprenyl diphosphate (UPP). Confers resistance to bacitracin. The protein is Undecaprenyl-diphosphatase 1 of Oenococcus oeni (strain ATCC BAA-331 / PSU-1).